Here is a 437-residue protein sequence, read N- to C-terminus: Proton/glutamate-aspartate symporter (437 aa).

The Cytoplasmic segment spans residues 1 to 5 (MKNIK). The helical transmembrane segment at 6–26 (FSLAWQILFAMVLGILLGSYL) threads the bilayer. Topologically, residues 27–50 (HYHSDSRDWLVVNLLSPAGDIFIH) are periplasmic. The chain crosses the membrane as a helical span at residues 51–71 (LIKMIVVPIVISTLVVGIAGV). The Cytoplasmic segment spans residues 72–84 (GDAKQLGRIGAKT). A helical membrane pass occupies residues 85 to 105 (IIYFEVITTVAIILGITLANV). At 106 to 159 (FQPGAGVDMSQLATVDISKYQSTTEAVQSSSHGIMGTILSLVPTNIVASMAKGE) the chain is on the periplasmic side. A helical transmembrane segment spans residues 160–180 (MLPIIFFSVLFGLGLSSLPAT). Topologically, residues 181–210 (HREPLVTVFRSISETMFKVTHMVMRYAPVG) are cytoplasmic. The helical transmembrane segment at 211-231 (VFALIAVTVANFGFSSLWPLA) threads the bilayer. K232 is a topological domain (periplasmic). Residues 233 to 253 (LVLLVHFAILFFALVVLGIVA) form a helical membrane-spanning segment. At 254-292 (RLCGLSVWILIRILKDELILAYSTASSESVLPRIIEKME) the chain is on the cytoplasmic side. A helical transmembrane segment spans residues 293–313 (AYGAPVSITSFVVPTGYSFNL). Topologically, residues 314–324 (DGSTLYQSIAA) are periplasmic. Residues 325 to 345 (IFIAQLYGIDLSIWQEIILVL) form a helical membrane-spanning segment. Residues 346-361 (TLMVTSKGIAGVPGVS) lie on the Cytoplasmic side of the membrane. The helical transmembrane segment at 362 to 382 (FVVLLATLGSVGIPLEGLAFI) threads the bilayer. The Periplasmic segment spans residues 383–387 (AGVDR). A helical membrane pass occupies residues 388–408 (ILDMARTALNVVGNALAVLVI). At 409–437 (AKWEHKFDRKKALAYEREVLGKFDKTADQ) the chain is on the cytoplasmic side.

The protein belongs to the dicarboxylate/amino acid:cation symporter (DAACS) (TC 2.A.23) family. GltP subfamily.

The protein localises to the cell inner membrane. With respect to regulation, glutamate uptake is inhibited by L-cysteate and beta-hydroxyaspartate. Inhibited by the uncoupler carbonylcyanide m-chlorophenylhydrazone (CCCP). Catalyzes the proton-dependent, binding-protein-independent transport of glutamate and aspartate. The chain is Proton/glutamate-aspartate symporter from Escherichia coli (strain K12).